The primary structure comprises 361 residues: MNINDTVERVTDGADLTVDEAREAARLVFEEATEAQIGALLAALRAKGETEAEIAGFAQGMRDAARTIEPDREPLVDTCGTGGDDYDTINVSTTAAIVAAGAGVPIAKHGNYSVSSSSGSADVLEVAGADVEAEPPAVEEAIETDGIGFMLAPVFHPAMKAVIGPRKELGMRTIFNVLGPLTNPAGADAQVLGVYDPDLVGTIARSLAHMPVEHALVVHGAGMDEIGIHDETVAAEVDGDEVREFTIAPEDLGLDRAPIEAVSGGTPEENAADLRGIVDGSVTGPKRDLILANAGAAIYVAGETDTLAAGVERAAEAIDSGAAATKFAALCGDDEAVEGDGEAASTDSAAASTTAGPEDDD.

5-phospho-alpha-D-ribose 1-diphosphate contacts are provided by residues Gly-80, 83-84 (GD), Thr-88, 90-93 (NVST), 108-116 (KHGNYSVSS), and Ser-120. Gly-80 lines the anthranilate pocket. Ser-92 contributes to the Mg(2+) binding site. Asn-111 lines the anthranilate pocket. Anthranilate is bound at residue Arg-166. Mg(2+)-binding residues include Asp-224 and Glu-225. Positions 338-361 (EGDGEAASTDSAAASTTAGPEDDD) are disordered. A compositionally biased stretch (low complexity) spans 343 to 355 (AASTDSAAASTTA).

Belongs to the anthranilate phosphoribosyltransferase family. As to quaternary structure, homodimer. Requires Mg(2+) as cofactor.

The enzyme catalyses N-(5-phospho-beta-D-ribosyl)anthranilate + diphosphate = 5-phospho-alpha-D-ribose 1-diphosphate + anthranilate. The protein operates within amino-acid biosynthesis; L-tryptophan biosynthesis; L-tryptophan from chorismate: step 2/5. In terms of biological role, catalyzes the transfer of the phosphoribosyl group of 5-phosphorylribose-1-pyrophosphate (PRPP) to anthranilate to yield N-(5'-phosphoribosyl)-anthranilate (PRA). The sequence is that of Anthranilate phosphoribosyltransferase from Halorubrum lacusprofundi (strain ATCC 49239 / DSM 5036 / JCM 8891 / ACAM 34).